A 387-amino-acid chain; its full sequence is F420-dependent formate dehydrogenase 1 subunit beta (387 aa).

2 4Fe-4S ferredoxin-type domains span residues 275 to 298 and 326 to 355; these read TIEE…VCPV and VRMS…ARIF. Residues Cys286, Cys289, Cys292, Cys296, Cys335, Cys338, Cys341, and Cys345 each coordinate [4Fe-4S] cluster. A disordered region spans residues 366–387; that stretch reads LGYRPGVDDEAPPALGGSCPTQ.

It belongs to the FrhB family. In terms of assembly, dimer of an alpha (FdhA1) and a beta (FdhB1) subunit. Requires [4Fe-4S] cluster as cofactor. FAD is required as a cofactor. Zn(2+) serves as cofactor.

The catalysed reaction is oxidized coenzyme F420-(gamma-L-Glu)(n) + formate + 2 H(+) = reduced coenzyme F420-(gamma-L-Glu)(n) + CO2. In terms of biological role, catalyzes the oxidation of formate to carbon dioxide, with coenzyme F420 as the electron acceptor. In vitro can also use methyl viologen as electron acceptor. The sequence is that of F420-dependent formate dehydrogenase 1 subunit beta from Methanococcus maripaludis (strain DSM 14266 / JCM 13030 / NBRC 101832 / S2 / LL).